We begin with the raw amino-acid sequence, 177 residues long: Peptide methionine sulfoxide reductase MsrA 2 (177 aa).

Residue Cys-12 is part of the active site.

It belongs to the MsrA Met sulfoxide reductase family.

The enzyme catalyses L-methionyl-[protein] + [thioredoxin]-disulfide + H2O = L-methionyl-(S)-S-oxide-[protein] + [thioredoxin]-dithiol. It carries out the reaction [thioredoxin]-disulfide + L-methionine + H2O = L-methionine (S)-S-oxide + [thioredoxin]-dithiol. Has an important function as a repair enzyme for proteins that have been inactivated by oxidation. Catalyzes the reversible oxidation-reduction of methionine sulfoxide in proteins to methionine. The polypeptide is Peptide methionine sulfoxide reductase MsrA 2 (Staphylococcus aureus (strain MRSA252)).